The sequence spans 427 residues: Tumor necrosis factor receptor superfamily member 16 (427 aa).

An N-terminal signal peptide occupies residues 1–28; that stretch reads MGAGATGRAMDGPRLLLLLLLGVSLGGA. Residues 29 to 250 lie on the Extracellular side of the membrane; sequence KEACPTGLYT…PVVTRGTTDN (222 aa). 4 TNFR-Cys repeats span residues 31-64, 66-107, 108-146, and 148-188; these read ACPT…QTVC, PCLD…DAVC, RCAY…NTVC, and ECPD…DAEC. 12 cysteine pairs are disulfide-bonded: Cys32–Cys43, Cys44–Cys57, Cys47–Cys64, Cys67–Cys83, Cys86–Cys99, Cys89–Cys107, Cys109–Cys122, Cys125–Cys138, Cys128–Cys146, Cys149–Cys164, Cys167–Cys180, and Cys170–Cys188. Asn60 carries an N-linked (GlcNAc...) asparagine glycan. Residues 194 to 219 are disordered; sequence RWITRSTPPEGSDSTAPSTQEPEAPP. Over residues 197–214 the composition is skewed to polar residues; it reads TRSTPPEGSDSTAPSTQE. The helical transmembrane segment at 251-272 threads the bilayer; the sequence is LIPVYCSILAAVVVGLVAYIAF. The Cytoplasmic portion of the chain corresponds to 273–427; that stretch reads KRWNSCKQNK…CSESTATSPV (155 aa). Composition is skewed to polar residues over residues 281–291 and 305–326; these read NKQGANSRPVN and SGIS…TASG. Positions 281–338 are disordered; sequence NKQGANSRPVNQTPPPEGEKLHSDSGISVDSQSLHDQQPHTQTASGQALKGDGGLYSS. Phosphoserine is present on Ser311. Residues 326–341 form a mediates interaction with KIDINS220 region; that stretch reads GQALKGDGGLYSSLPP. The region spanning 344–421 is the Death domain; that stretch reads REEVEKLLNG…DLVESLCSES (78 aa).

As to quaternary structure, homodimer; disulfide-linked. Heterodimer with SORCS2. The extracellular domains of the heterodimer bind NGF. The cytoplasmic region of the heterodimer binds TRIO. NGF binding mediates dissociation of TRIO from the receptor complex. Interacts with RTN4R. Interacts with TRAF2, TRAF4, TRAF6, PTPN13 and RANBP9. Interacts through TRAF6 with SQSTM1 which bridges NGFR to NTRK1. Interacts with BEX1. Interacts with BEX3. Interacts with KIDINS220 and NTRK1. Can form a ternary complex with NTRK1 and KIDINS220 and this complex is affected by the expression levels of KIDINS220. An increase in KIDINS220 expression leads to a decreased association of NGFR and NTRK1. Interacts with NTRK2; may regulate the ligand specificity of the NTRK2 receptor. Interacts (via death domain) with RAB31. Interacts with LINGO1. Interacts with NRADD. Interacts with MAGED1; the interaction antagonizes the association NGFR:NTRK1. Interacts (via death domain) with ARHGDIA and RIPK2. Interacts with BFAR. N- and O-glycosylated. Post-translationally, O-linked glycans consist of Gal(1-3)GalNAc core elongated by 1 or 2 NeuNAc. In terms of processing, phosphorylated on serine residues.

The protein resides in the cell membrane. Its subcellular location is the cytoplasm. It is found in the perikaryon. It localises to the cell projection. The protein localises to the growth cone. The protein resides in the dendritic spine. Its function is as follows. Low affinity receptor which can bind to NGF, BDNF, NTF3, and NTF4. Forms a heterodimeric receptor with SORCS2 that binds the precursor forms of NGF, BDNF and NTF3 with high affinity, and has much lower affinity for mature NGF and BDNF. Plays an important role in differentiation and survival of specific neuronal populations during development. Can mediate cell survival as well as cell death of neural cells. Plays a role in the inactivation of RHOA. Plays a role in the regulation of the translocation of GLUT4 to the cell surface in adipocytes and skeletal muscle cells in response to insulin, probably by regulating RAB31 activity, and thereby contributes to the regulation of insulin-dependent glucose uptake. Necessary for the circadian oscillation of the clock genes BMAL1, PER1, PER2 and NR1D1 in the suprachiasmatic nucleus (SCmgetaN) of the brain and in liver and of the genes involved in glucose and lipid metabolism in the liver. Together with BFAR negatively regulates NF-kappa-B and JNK-related signaling pathways. In Homo sapiens (Human), this protein is Tumor necrosis factor receptor superfamily member 16 (NGFR).